The primary structure comprises 447 residues: MASAPNANGDAAVSDYDLMLKLAQNLDRHMIFPLLEFSAGQLVDEESGVVRDEAKAREITQAKYSLLKNSNMTDYVANLYCELAGVEEPPAEFADKKQKVFSQLQNLEQQTSKIIELLEREDVVNNLRSDKVANLEFLKREHQVTMDMVNALFDLGNLQYSCGNYGDASEMLYRFRVLSTDNDKVAFATWGRLACEILTMNWESAMEELVKVRETIDTKLSQNPLAQLQHRTALTHWALFPLFNFEKAREPILELFFNAGYINTIQANCPWILRYLAVAVITNRGRAKNPGIHQKQMKDVVRIVKQEAYEYQDPITRFVHALAIDFDFEEAQRQLVLAEEVLRSDFFLLAHADDFVDSARHLIFESYCKIHARISLKDLSARLGLNADAAEKWIVNLIRDTRLDAKIDYKEGTVVMNHPPSSVYQQVIEKTKGGFFRTQVLTAAIAK.

Residues 253-421 (LELFFNAGYI…GTVVMNHPPS (169 aa)) form the PCI domain.

This sequence belongs to the eIF-3 subunit E family. In terms of assembly, component of the eukaryotic translation initiation factor 3 (eIF-3) complex.

It localises to the cytoplasm. Component of the eukaryotic translation initiation factor 3 (eIF-3) complex, which is involved in protein synthesis of a specialized repertoire of mRNAs and, together with other initiation factors, stimulates binding of mRNA and methionyl-tRNAi to the 40S ribosome. The eIF-3 complex specifically targets and initiates translation of a subset of mRNAs involved in cell proliferation. The polypeptide is Eukaryotic translation initiation factor 3 subunit E (Chaetomium globosum (strain ATCC 6205 / CBS 148.51 / DSM 1962 / NBRC 6347 / NRRL 1970) (Soil fungus)).